Reading from the N-terminus, the 324-residue chain is EFHPGTFPPSFGSVAPFLADLDTTDGLGNVYYREDLSPFIIQMAAEYVQRGFPEVSFQPTSVVVVTWESMAPYGGPSGSLVEEGKRNTFQAVLASSNSSSYAIFLYPDDGLQFFTTFSKKDENQVPAVVGFSKGLEGFLWKSNGAYNIFANDRESIENLAKSSNAGHQGVWVFEIGSPATAKGVVPADVNLDVDDDGADYEDEDYDLQTSHLGLEDVATQPFPSHSPRRGYPDPHNVPRTLAPSYEATERPHGIPTERTKSFQLPVERFPQKHPQVIDVDEVEETGVVFSYNTGSQQTCANNRHQCSVHAECRDYATGFCCRCV.

The 163-residue stretch at 16 to 178 (PFLADLDTTD…GVWVFEIGSP (163 aa)) folds into the NIDO domain. Asn97 carries an N-linked (GlcNAc...) asparagine glycan. 2 positions are modified to sulfotyrosine: Tyr200 and Tyr205. Residues 219–259 (TQPFPSHSPRRGYPDPHNVPRTLAPSYEATERPHGIPTERT) form a disordered region. Positions 247-259 (ATERPHGIPTERT) are enriched in basic and acidic residues. The EGF-like domain occupies 295-324 (SQQTCANNRHQCSVHAECRDYATGFCCRCV). 2 disulfide bridges follow: Cys299–Cys312 and Cys306–Cys321.

As to quaternary structure, interacts with FBLN1. Interacts with LGALS3BP. Interacts with PLXDC1. Interacts with SVEP1. Post-translationally, N- and O-glycosylated.

It is found in the secreted. The protein resides in the extracellular space. The protein localises to the extracellular matrix. It localises to the basement membrane. Its function is as follows. Sulfated glycoprotein widely distributed in basement membranes and tightly associated with laminin. Also binds to collagen IV and perlecan. It probably has a role in cell-extracellular matrix interactions. This Rattus norvegicus (Rat) protein is Nidogen-1 (Nid1).